The following is a 377-amino-acid chain: Pyruvate dehydrogenase E1 component subunit alpha, mitochondrial (377 aa).

Residues 1–26 (MLSNFLKVNSKALGHIRTFASKSGEI) constitute a mitochondrion transit peptide. Pyruvate is bound by residues His83, Tyr109, Arg110, Gly156, Val158, Asp187, Gly188, Ala189, Asn216, and Tyr218. Residues Tyr109, Arg110, Gly156, Val158, Asp187, Gly188, Ala189, and Asn216 each contribute to the thiamine diphosphate site. Residue Asp187 participates in Mg(2+) binding. Residues Asn216 and Tyr218 each coordinate Mg(2+). Residue His283 participates in thiamine diphosphate binding.

As to quaternary structure, tetramer of 2 alpha and 2 beta subunits. It depends on thiamine diphosphate as a cofactor. The cofactor is Mg(2+).

It localises to the mitochondrion matrix. The catalysed reaction is N(6)-[(R)-lipoyl]-L-lysyl-[protein] + pyruvate + H(+) = N(6)-[(R)-S(8)-acetyldihydrolipoyl]-L-lysyl-[protein] + CO2. Its activity is regulated as follows. E1 activity is regulated by phosphorylation (inactivation) and dephosphorylation (activation) of the alpha subunit. Its function is as follows. The pyruvate dehydrogenase complex catalyzes the overall conversion of pyruvate to acetyl-CoA and CO(2). It contains multiple copies of three enzymatic components: pyruvate dehydrogenase (E1), dihydrolipoamide acetyltransferase (E2) and lipoamide dehydrogenase (E3). This is Pyruvate dehydrogenase E1 component subunit alpha, mitochondrial (pdhA) from Dictyostelium discoideum (Social amoeba).